The chain runs to 1685 residues: Collagen alpha-5(IV) chain (1685 aa).

The signal sequence occupies residues 1 to 26 (MKLRGVSLAAGLFLLALSLWGQPAEA). The segment at 27–41 (AACYGCSPGSKCDCS) is nonhelical region (NC2). Residues 42–1456 (GIKGEKGERG…QGPPGPPGTS (1415 aa)) are triple-helical region. The tract at residues 49–1459 (ERGFPGLEGH…PGPPGTSSVA (1411 aa)) is disordered. Residues 52–61 (FPGLEGHPGL) are compositionally biased toward low complexity. The span at 62–73 (PGFPGPEGPPGP) shows a compositional bias: pro residues. N-linked (GlcNAc...) asparagine glycosylation is present at Asn-125. Pro residues predominate over residues 188-212 (TGIPGPIGPPGPPGLMGPPGPPGLP). Positions 214-225 (PKGNMGLNFQGP) are enriched in low complexity. Residues 246 to 257 (EQKRPIDVEFQK) show a composition bias toward basic and acidic residues. A compositionally biased stretch (pro residues) spans 266–281 (RGPPGPPGIRGPPGPP). Composition is skewed to basic and acidic residues over residues 284 to 305 (EKGEKGEQGEPGKRGKPGKDGE) and 324 to 333 (PGRDGEKGQK). Positions 413–430 (PPGISIPGPPGLDGQPGA) are enriched in low complexity. Pro residues-rich tracts occupy residues 431-445 (PGLPGPPGPAGPHIP), 493-505 (PGQPGLPGLPGPP), 620-630 (MGPPGFGPPGP), and 709-727 (PGPPGPKGFPGIPGPPGAP). Low complexity predominate over residues 788–797 (RTGLDGLPGP). Composition is skewed to pro residues over residues 848–859 (PGPPGLDVPGPP) and 868–880 (PGAPGPIGPPGSP). 5 stretches are compositionally biased toward low complexity: residues 882 to 901 (LPGKAGASGFPGTKGEMGMM), 912 to 931 (IPGRSGVPGLKGDDGLQGQP), 983 to 999 (YQGLPGDPGQPGLSGQP), 1010 to 1026 (NPGLPGQPGLIGPPGLK), and 1111 to 1120 (TPGAKGQPGL). Residues 1139–1148 (PGNPGLPGEP) show a composition bias toward pro residues. Gly residues-rich tracts occupy residues 1149–1158 (GPVGGGGHPG) and 1202–1211 (GQKGDGGLPG). Composition is skewed to pro residues over residues 1234–1243 (QGPPGPPGSP) and 1256–1274 (PQGPPGRPGLPGPEGPPGL). Residues 1295-1308 (LPGLKGDQGPPGLQ) are compositionally biased toward low complexity. Residues 1353–1362 (IGPPGPPGLP) are compositionally biased toward pro residues. The region spanning 1461 to 1685 (GFLITRHSQT…SRCQVCMKRT (225 aa)) is the Collagen IV NC1 domain. Disulfide bonds link Cys-1476/Cys-1567, Cys-1509/Cys-1564, Cys-1521/Cys-1527, Cys-1586/Cys-1681, Cys-1620/Cys-1678, and Cys-1632/Cys-1638. Met-1549 is covalently cross-linked (S-Lysyl-methionine sulfilimine (Met-Lys) (interchain with K-1667)). An S-Lysyl-methionine sulfilimine (Lys-Met) (interchain with M-1549) cross-link involves residue Lys-1667.

This sequence belongs to the type IV collagen family. There are six type IV collagen isoforms, alpha 1(IV)-alpha 6(IV), each of which can form a triple helix structure with 2 other chains to generate type IV collagen network. Post-translationally, prolines at the third position of the tripeptide repeating unit (G-X-Y) are hydroxylated in some or all of the chains. In terms of processing, type IV collagens contain numerous cysteine residues which are involved in inter- and intramolecular disulfide bonding. 12 of these, located in the NC1 domain, are conserved in all known type IV collagens. The trimeric structure of the NC1 domains is stabilized by covalent bonds between Lys and Met residues. Isoform 2 is found in kidney.

The protein localises to the secreted. The protein resides in the extracellular space. It is found in the extracellular matrix. Its subcellular location is the basement membrane. Its function is as follows. Type IV collagen is the major structural component of glomerular basement membranes (GBM), forming a 'chicken-wire' meshwork together with laminins, proteoglycans and entactin/nidogen. In Homo sapiens (Human), this protein is Collagen alpha-5(IV) chain (COL4A5).